The primary structure comprises 194 residues: ATP-dependent Clp protease proteolytic subunit (194 aa).

S98 serves as the catalytic Nucleophile. H123 is an active-site residue.

This sequence belongs to the peptidase S14 family. Fourteen ClpP subunits assemble into 2 heptameric rings which stack back to back to give a disk-like structure with a central cavity, resembling the structure of eukaryotic proteasomes.

The protein localises to the cytoplasm. It carries out the reaction Hydrolysis of proteins to small peptides in the presence of ATP and magnesium. alpha-casein is the usual test substrate. In the absence of ATP, only oligopeptides shorter than five residues are hydrolyzed (such as succinyl-Leu-Tyr-|-NHMec, and Leu-Tyr-Leu-|-Tyr-Trp, in which cleavage of the -Tyr-|-Leu- and -Tyr-|-Trp bonds also occurs).. In terms of biological role, cleaves peptides in various proteins in a process that requires ATP hydrolysis. Has a chymotrypsin-like activity. Plays a major role in the degradation of misfolded proteins. The chain is ATP-dependent Clp protease proteolytic subunit from Clostridium kluyveri (strain NBRC 12016).